The following is a 198-amino-acid chain: Phosphoheptose isomerase (198 aa).

An SIS domain is found at 40–198; that stretch reads IVTALRSGRK…IEAALMQDLS (159 aa). 55 to 57 provides a ligand contact to substrate; the sequence is NGG. The Zn(2+) site is built by H64 and E68. Substrate contacts are provided by residues E68, 97 to 98, 123 to 125, S128, and Q175; these read ND and STS. Positions 175 and 183 each coordinate Zn(2+).

The protein belongs to the SIS family. GmhA subfamily. In terms of assembly, homotetramer. It depends on Zn(2+) as a cofactor.

Its subcellular location is the cytoplasm. The enzyme catalyses 2 D-sedoheptulose 7-phosphate = D-glycero-alpha-D-manno-heptose 7-phosphate + D-glycero-beta-D-manno-heptose 7-phosphate. It functions in the pathway carbohydrate biosynthesis; D-glycero-D-manno-heptose 7-phosphate biosynthesis; D-glycero-alpha-D-manno-heptose 7-phosphate and D-glycero-beta-D-manno-heptose 7-phosphate from sedoheptulose 7-phosphate: step 1/1. In terms of biological role, catalyzes the isomerization of sedoheptulose 7-phosphate in D-glycero-D-manno-heptose 7-phosphate. This chain is Phosphoheptose isomerase, found in Bradyrhizobium sp. (strain BTAi1 / ATCC BAA-1182).